Here is a 317-residue protein sequence, read N- to C-terminus: Ribonuclease 3-like protein 2 (317 aa).

The tract at residues 1–26 (MAPPPAMKPASRKRGPPAPDPVELPP) is disordered. Residues 16 to 26 (PPAPDPVELPP) are compositionally biased toward pro residues. The RNase III domain occupies 37–185 (AARVERLLRY…IAAAVYVDCK (149 aa)). 3 residues coordinate Mg(2+): glutamate 74, aspartate 171, and glutamate 174. Residues 211 to 274 (QPVTMLHELC…ARDATRKLAG (64 aa)) enclose the DRBM domain.

It depends on Mg(2+) as a cofactor. Mn(2+) serves as cofactor.

Cleaves double-stranded RNA (dsRNA). In Oryza sativa subsp. japonica (Rice), this protein is Ribonuclease 3-like protein 2.